Reading from the N-terminus, the 119-residue chain is Phenol 2-monooxygenase, oxygenase component DmpO (119 aa).

The multicomponent enzyme phenol hydroxylase is formed by DmpL (P1 component), DmpM (P2 component), DmpN (P3 component), DmpO (P4 component) and DmpP (P5 component). The oxygenase component is a dimer composed of three subunits, DmpL, DmpN and DmpO (DmpLNO).

The enzyme catalyses phenol + NADH + O2 + H(+) = catechol + NAD(+) + H2O. Its pathway is aromatic compound metabolism; phenol degradation. Its activity is regulated as follows. Requires DmpM for efficient turnover. The activity of DmpLNO oxygenase is inhibited by dithiothreitol (DTT) by a mechanism apparently involving H(2)O(2) generation. Part of a multicomponent enzyme which catalyzes the degradation of phenol and some of its methylated derivatives. DmpL, DmpN and DmpO form the oxygenase component of the complex. Required for growth on phenol and for in vitro phenol hydroxylase activity. In Pseudomonas sp. (strain CF600), this protein is Phenol 2-monooxygenase, oxygenase component DmpO.